We begin with the raw amino-acid sequence, 206 residues long: Large ribosomal subunit protein uL4 (206 aa).

The disordered stretch occupies residues 46–77 (GTRAQKDREQVRHSTKKPFKQKGTGNARAGMT).

This sequence belongs to the universal ribosomal protein uL4 family. In terms of assembly, part of the 50S ribosomal subunit.

Functionally, one of the primary rRNA binding proteins, this protein initially binds near the 5'-end of the 23S rRNA. It is important during the early stages of 50S assembly. It makes multiple contacts with different domains of the 23S rRNA in the assembled 50S subunit and ribosome. Its function is as follows. Forms part of the polypeptide exit tunnel. This Paracidovorax citrulli (strain AAC00-1) (Acidovorax citrulli) protein is Large ribosomal subunit protein uL4.